A 99-amino-acid polypeptide reads, in one-letter code: Large ribosomal subunit protein eL30 (99 aa).

The protein belongs to the eukaryotic ribosomal protein eL30 family.

The chain is Large ribosomal subunit protein eL30 from Methanosarcina acetivorans (strain ATCC 35395 / DSM 2834 / JCM 12185 / C2A).